The sequence spans 449 residues: Hyaluronidase (449 aa).

Positions 1–23 are cleaved as a signal peptide; it reads MYHLWIKCLAAWIFLKRFNGVHV. Disulfide bonds link Cys-47-Cys-340 and Cys-211-Cys-227. Residues Asn-67 and Asn-103 are each glycosylated (N-linked (GlcNAc...) asparagine). The Proton donor role is filled by Glu-135. Residue Asn-153 is glycosylated (N-linked (GlcNAc...) asparagine). N-linked (GlcNAc...) asparagine glycosylation occurs at Asn-357. Disulfide bonds link Cys-365–Cys-376, Cys-370–Cys-427, and Cys-429–Cys-438. N-linked (GlcNAc...) asparagine glycosylation occurs at Asn-401. The region spanning 427-438 is the EGF-like domain; the sequence is CQCYQGWQGLYC.

This sequence belongs to the glycosyl hydrolase 56 family. As to quaternary structure, monomer. Expressed by the venom gland.

The protein resides in the secreted. The enzyme catalyses Random hydrolysis of (1-&gt;4)-linkages between N-acetyl-beta-D-glucosamine and D-glucuronate residues in hyaluronate.. Its function is as follows. Snake venom endo-hyaluronidase that degrades hyaluronan to smaller oligosaccharide fragments. In venom, it is not toxic by itself, but increases the diffusion of other venom proteins by degrading the extracellular matrix. In addition, it displays antiedematogenic activity. The chain is Hyaluronidase from Echis ocellatus (Ocellated saw-scaled viper).